The chain runs to 1070 residues: DNA-directed RNA polymerase subunit beta (1070 aa).

This sequence belongs to the RNA polymerase beta chain family. As to quaternary structure, in plastids the minimal PEP RNA polymerase catalytic core is composed of four subunits: alpha, beta, beta', and beta''. When a (nuclear-encoded) sigma factor is associated with the core the holoenzyme is formed, which can initiate transcription.

Its subcellular location is the plastid. The protein resides in the chloroplast. The catalysed reaction is RNA(n) + a ribonucleoside 5'-triphosphate = RNA(n+1) + diphosphate. Its function is as follows. DNA-dependent RNA polymerase catalyzes the transcription of DNA into RNA using the four ribonucleoside triphosphates as substrates. The protein is DNA-directed RNA polymerase subunit beta of Vitis vinifera (Grape).